Here is a 999-residue protein sequence, read N- to C-terminus: MYIQQSQIDVNSTMIKPLKNSNGISNSNINSFSIKNDIDSNINSNSNNIGNGNGNGNNSCNDHKNNNNNNNNRISPTLSSSSSSSSSHTTSPIIPSSKLNSNTTTSTTPTSTTSSTPTTPTITPSSPSVLYKNPMEFDNVFQFKEVLQRVLDSQFQSDWVAIIAKILGYILPNNDIVLRKCQNDEDVKELLSLLRPSSQLFRMIIENFTNDSFQFYFPFDRIPKCVIFDITIKNQSTPKIINQININQYKKDIVVNMFQYFFFAFGLFPDHLNLEMQLLPANLNNNNNNNNNNNSINNTLNSIENKFTRTIHGIPTFSANRQNSGNRLSSSTGFNSQRIFSGSSSSSSSGSSQTDNSLLFNYQQQQYMMSQKTKSIYLRLLSEYMDFFLPFQRSLIDGNLIIDPNRKLMVNHDMSLTFLKIITESLLGHNLLNQSLNILNQFNYSLLSSFKKPTPVYLSTIQTFITYFQCYSYTFNYLSPFSINSPPSSPSPSPITSNGNKSTTATATIIQPILMTPSLGLFFKQREIVSSGLFEYFVSYFERLDPNDQYLPIDKILNIWVGWLTPWDPNTRTSRRISPNVLQKNNKSTSSFQNLLNLTSSFTHSIGVVGNSGGNKNSNIGSASNLLVLNQEYYSKWENYVIEHYYFYSFIFNLLLIRSQSLDITSYLYIFKSILNIFNSPVLKSLLKRISKHDSIIVQQQEQQYQYQYQQQQQYHYQQPQFYQQSQQQQSQQQQQQQQQQQQQQQQQQQQQQQQQQQQQQQQQQQQPQQPSQQQTPSVSSNYIDVSKDILLRLEYQIGFYQIREFINERNLFSELMVSNASRLVDILTLKINQQNQKDYLEVIKSLCTFYDFEEPIIKEKINNTTIINNNPNDINNANNSNNNNNNQSQVLLSPNRNKDGTLNDMGRKQIYDGKVICKPFDSNYPYEKLISQPLVFEKQPITSEEIGIIIKFGYMLTDNSQTRLFIRKLARKKLLFSLVLILAFIWFFFEIYFFFTRK.

Residues 45-128 (NSNNIGNGNG…TPTITPSSPS (84 aa)) are compositionally biased toward low complexity. Residues 45–129 (NSNNIGNGNG…PTITPSSPSV (85 aa)) form a disordered region. A coiled-coil region spans residues 723 to 767 (YQQSQQQQSQQQQQQQQQQQQQQQQQQQQQQQQQQQQQQQQQQQQ). The span at 873–887 (NDINNANNSNNNNNN) shows a compositional bias: low complexity. The segment at 873–904 (NDINNANNSNNNNNNQSQVLLSPNRNKDGTLN) is disordered. The chain crosses the membrane as a helical span at residues 976-996 (LFSLVLILAFIWFFFEIYFFF).

It is found in the membrane. This is an uncharacterized protein from Dictyostelium discoideum (Social amoeba).